A 210-amino-acid chain; its full sequence is MIKQPALAQEQYACVYAWLALLFFREVDDEGLIQLQSAEIADWLALLKRQPALAASVALLEQKIAALSLRQDAQLELAADFCGLFLMTDKKSALPYASQYPQQEPGMIKHLLLEAGMEVNDDFKEPTDHLAIYLELLSHLHFSLGESFQQRRMNKLRQKTLSSLLEWLPEFTNNCLKHDPYGFYAALSQLLLAIVRFDDGKEDLSIVAAE.

This sequence belongs to the TorD/DmsD family. TorD subfamily.

The protein resides in the cytoplasm. Involved in the biogenesis of TorA. Acts on TorA before the insertion of the molybdenum cofactor and, as a result, probably favors a conformation of the apoenzyme that is competent for acquiring the cofactor. This Salmonella newport (strain SL254) protein is Chaperone protein TorD.